Here is a 600-residue protein sequence, read N- to C-terminus: Elongation factor 4 (600 aa).

The region spanning aspartate 13 to arginine 194 is the tr-type G domain. GTP is bound by residues aspartate 25–threonine 30 and asparagine 141–aspartate 144.

This sequence belongs to the TRAFAC class translation factor GTPase superfamily. Classic translation factor GTPase family. LepA subfamily.

It localises to the cell membrane. The catalysed reaction is GTP + H2O = GDP + phosphate + H(+). In terms of biological role, required for accurate and efficient protein synthesis under certain stress conditions. May act as a fidelity factor of the translation reaction, by catalyzing a one-codon backward translocation of tRNAs on improperly translocated ribosomes. Back-translocation proceeds from a post-translocation (POST) complex to a pre-translocation (PRE) complex, thus giving elongation factor G a second chance to translocate the tRNAs correctly. Binds to ribosomes in a GTP-dependent manner. The protein is Elongation factor 4 of Rubrobacter xylanophilus (strain DSM 9941 / JCM 11954 / NBRC 16129 / PRD-1).